The following is a 529-amino-acid chain: Meiosis 1 arrest protein (529 aa).

Disordered stretches follow at residues 180–201 and 504–529; these read KGIQ…DESS and AASK…PSHT. Over residues 188-200 the composition is skewed to polar residues; the sequence is SPSPTEEPSNDES. At Ser516 the chain carries Phosphoserine.

In terms of tissue distribution, expressed in germ cells of the testis. Expressed from spermatogonia to spermatids. Expressed at very low levels in lung, stomach, thymus. Not detected in Sertoli cells.

It is found in the cytoplasm. Functionally, required for meiosis I progression during spermatogenesis. In Mus musculus (Mouse), this protein is Meiosis 1 arrest protein (M1ap).